The chain runs to 543 residues: Heparanase-like protein 1 (543 aa).

Residues 1-24 form the signal peptide; the sequence is MGFRVCVIVVFLGCLLLVPEKTMA. N-linked (GlcNAc...) asparagine glycosylation is present at Asn184. Glu201 functions as the Proton donor in the catalytic mechanism. Asn304 is a glycosylation site (N-linked (GlcNAc...) asparagine). Glu320 (nucleophile) is an active-site residue. 2 N-linked (GlcNAc...) asparagine glycosylation sites follow: Asn425 and Asn428.

Belongs to the glycosyl hydrolase 79 family.

Its subcellular location is the lysosome membrane. It localises to the secreted. Its function is as follows. Endoglycosidase which is a cell surface and extracellular matrix-degrading enzyme. Cleaves heparan sulfate proteoglycans (HSPGs) into heparan sulfate side chains and core proteoglycans. The polypeptide is Heparanase-like protein 1 (Arabidopsis thaliana (Mouse-ear cress)).